The primary structure comprises 292 residues: MKGTIIKGIGGFYYIKIDNSEEIIECKARGKFRHTELTPMIGDYVEISIDKNNKGAIEKIYERRSELFRPAVANVTQALVVFSFKNPDINIDLLNKFLLLCEYNNLKVIVCFNKMDLVNKEDYKDIISMIEQAGYDIIFLNAKEERNMDIIKKLIKDNVTVFCGPSGVGKSTMLNKIIGKETMITGNISEKLKRGKHTTRHSELIYVDEGLLVDTPGFSSLDINFMEKEDLLYCIPEFRDFIGECKFTGCLHHREPNCAVKKAVEEGHIHKNRYDFYIKTLEEIMNRRKKKW.

Positions 64 to 221 (RSELFRPAVA…LVDTPGFSSL (158 aa)) constitute a CP-type G domain. GTP contacts are provided by residues 113-116 (NKMD) and 164-172 (GPSGVGKST). Positions 245, 250, 252, and 258 each coordinate Zn(2+).

The protein belongs to the TRAFAC class YlqF/YawG GTPase family. RsgA subfamily. Monomer. Associates with 30S ribosomal subunit, binds 16S rRNA. The cofactor is Zn(2+).

The protein localises to the cytoplasm. Its function is as follows. One of several proteins that assist in the late maturation steps of the functional core of the 30S ribosomal subunit. Helps release RbfA from mature subunits. May play a role in the assembly of ribosomal proteins into the subunit. Circularly permuted GTPase that catalyzes slow GTP hydrolysis, GTPase activity is stimulated by the 30S ribosomal subunit. The chain is Small ribosomal subunit biogenesis GTPase RsgA from Clostridium botulinum (strain 657 / Type Ba4).